A 307-amino-acid chain; its full sequence is Melanoma-associated antigen F1 (307 aa).

The segment at 1-55 is disordered; the sequence is MLQTPESRGLPVPQAEGEKDGGHDGETRAPTASQERPKEELGAGREEGAAEPALT. Composition is skewed to basic and acidic residues over residues 16–27 and 35–48; these read EGEKDGGHDGET and ERPK…REEG. Positions 76 to 277 constitute an MAGE domain; sequence LNRTVAELVQ…HWPVQYREAL (202 aa).

As to quaternary structure, interacts (via MAGE domain) with RING-type zinc finger-containing E3 ubiquitin-protein ligases LNX1, TRIM27 and NSMCE1; the interaction is direct. In terms of tissue distribution, ubiquitous.

In terms of biological role, enhances ubiquitin ligase activity of RING-type zinc finger-containing E3 ubiquitin ligases. Proposed to act through recruitment and/or stabilization of the E2 ubiquitin-conjugating enzyme at the E3:substrate complex. MAGEF1-NSMCE1 ubiquitin ligase complex promotes proteasomal degradation of MMS19, a key component of the cytosolic iron-sulfur protein assembly (CIA) machinery. Down-regulation of MMS19 impairs the activity of several DNA repair and metabolism enzymes such as ERCC2/XPD, FANCJ, RTEL1 and POLD1 that require iron-sulfur clusters as cofactors. May negatively regulate genome integrity by inhibiting homologous recombination-mediated double-strand break DNA repair. The polypeptide is Melanoma-associated antigen F1 (Homo sapiens (Human)).